Reading from the N-terminus, the 542-residue chain is Putative leucine aminopeptidase 1 (542 aa).

K294 and D299 together coordinate Mn(2+). The active site involves K323. Residues D336, D396, and E398 each contribute to the Mn(2+) site. The active site involves R400.

It belongs to the peptidase M17 family. In terms of assembly, homohexamer (dimer of homotrimers). Mn(2+) is required as a cofactor.

Its subcellular location is the cytoplasm. The enzyme catalyses Release of an N-terminal amino acid, Xaa-|-Yaa-, in which Xaa is preferably Leu, but may be other amino acids including Pro although not Arg or Lys, and Yaa may be Pro. Amino acid amides and methyl esters are also readily hydrolyzed, but rates on arylamides are exceedingly low.. It catalyses the reaction Release of N-terminal proline from a peptide.. Its function is as follows. Presumably involved in the processing and regular turnover of intracellular proteins. Catalyzes the removal of unsubstituted N-terminal amino acids from various peptides. The sequence is that of Putative leucine aminopeptidase 1 from Oryza sativa subsp. japonica (Rice).